Here is a 720-residue protein sequence, read N- to C-terminus: Transcriptional regulator EFH1 (720 aa).

Composition is skewed to polar residues over residues 1–15 and 22–35; these read MNGIMTTSSHSNFYN and PSSSDHIPGPSSQD. Disordered stretches follow at residues 1-111, 181-223, 245-336, and 365-437; these read MNGI…SSST, SFQM…HQSQ, QKEF…TIAT, and YQRQ…PQPD. The segment covering 71-105 has biased composition (low complexity); that stretch reads QQNQSESQQSRQSHHLQQQQQQQQQQQQNQHNQQN. Positions 181-200 are enriched in polar residues; sequence SFQMGSVSTPDTQNSSIRSK. The segment covering 201-223 has biased composition (low complexity); sequence QQQQHSYQQQQPQQLSQSQHQSQ. Over residues 254-266 the composition is skewed to polar residues; it reads GDQTLVPQTNSKL. Over residues 267-304 the composition is skewed to low complexity; the sequence is QQQISETSYSQQQQQQQSPPTPQKQQQQQHYQHQTTQP. Positions 313 to 336 are enriched in polar residues; the sequence is YSQTGGPSSSPVAGNISIPTTIAT. Residues 366-399 show a composition bias toward low complexity; it reads QRQQQQQQQHQQPQSQQMSQISQLSQQIPPQGSS. Positions 400-413 are enriched in polar residues; it reads KNISINSTPTKSRA. Residues 414-433 are compositionally biased toward low complexity; sequence SSITTRSGRQSRSTSISSFI. The HTH APSES-type domain occupies 446–552; sequence KVATTRWDDE…KNIKQYFLTK (107 aa). Residues 480–501 constitute a DNA-binding region (H-T-H motif); sequence GTKLLNVIGMTRGKRDGILKTE. Over residues 569-582 the composition is skewed to basic and acidic residues; sequence GMTRQREEVRREGR. A disordered region spans residues 569-662; it reads GMTRQREEVR…KNSESKLLET (94 aa). The segment covering 613–644 has biased composition (acidic residues); it reads VPGDDEEEEDDDDDDDDDEEEGEQDDEEEEDG. Positions 645–654 are enriched in low complexity; the sequence is SSTSMSSSKN.

The protein belongs to the EFG1/PHD1/stuA family.

The protein localises to the nucleus. Transcription factor that regulates filamentous growth through repression of EFG1. Regulates the level of colonizing fungi, favoring commensalism as opposed to candidiasis. This Candida albicans (strain SC5314 / ATCC MYA-2876) (Yeast) protein is Transcriptional regulator EFH1 (EFH1).